Reading from the N-terminus, the 336-residue chain is MITDTIVELEGVNGERFNLTTGDQGVYLATDVEGCFYDPPVKVVVEEPGNYPGARYLSHRALKRDIVFGVVILNDAKQGPRSWLSRDSEWRKAWAFNRTCKLYVTTPDSGTRYLKLALFESPTVKMDTDPRGKPLEVTVMSCIAYDPFWYEDDKVFSAKTKTDTRFDPSFWTPPWPWEELPKETLRIKVGREQGGLNPTDQYIFPKWTVPGSTEKVPNFPWPFPPNVPIPWETAPFTQFVIPDYSFEDEEFRNRRLKTPGLIYGENCVIDTDRREEQIASESGSPVWARMNGVRFRNSIPPYTEEAEFVIDASGCAPGQVVTLRLTRPWSRCWGLE.

The protein is Minor tail protein Gp27 (27) of Mycobacterium phage L5 (Mycobacteriophage L5).